The following is a 206-amino-acid chain: MSHYSQAKFNLSAPDISHLSADQGIEVAFAGRSNAGKSSALNRLTRQKSLARTSKTPGRTQLINVFDLDEDRRLIDLPGYGYAKVPMAIKLKWQKSLGEYLQKRESLKGLVVLMDIRHPFKDLDQELIQWAVAADLPVLGLLTKADKLKSGKRKAQLLMAREASLAFCGDVTIHLFSSLNGLGLDNCERVLDKWFGYAQDEELEQE.

In terms of domain architecture, EngB-type G spans 23-197 (QGIEVAFAGR…ERVLDKWFGY (175 aa)). GTP is bound by residues 31–38 (GRSNAGKS), 58–62 (GRTQL), 76–79 (DLPG), 143–146 (TKAD), and 176–178 (FSS). Mg(2+) contacts are provided by Ser-38 and Thr-60.

It belongs to the TRAFAC class TrmE-Era-EngA-EngB-Septin-like GTPase superfamily. EngB GTPase family. Mg(2+) serves as cofactor.

Necessary for normal cell division and for the maintenance of normal septation. In Pseudoalteromonas atlantica (strain T6c / ATCC BAA-1087), this protein is Probable GTP-binding protein EngB.